Here is a 952-residue protein sequence, read N- to C-terminus: MKLSPLSFSTSSSFSHADGIDDGVELISSPFAGGAMLPVFLNDLSRNSGESGSGSSWERELVEVTLELDVGDDSILVCGMSEAASVDSRARSVDLVTARLSRNLSNASTRIRQKLGKLLRSESWKTTTSSTAGERDRDLERQTAVTLGILTARDKRKEDAKLQRSTSSAQRALKGLQFINKTTRGNSCVCDWDCDCDQMWKKVEKRFESLSKNGLLARDDFGECVGMVDSKDFAVSVFDALARRRRQKLEKITKDELHDFWLQISDQSFDARLQIFFDMADSNEDGKITREEIKELLMLSASANKLAKLKEQAEEYASLIMEELDPENFGYIELWQLETLLLQRDAYMNYSRPLSTTSGGVSTPRRNLIRPRHVVQKCRKKLQCLILDNWQRSWVLLVWVMLMAILFVWKFLEYREKAAFKVMGYCLTTAKGAAETLKLNMALVLLPVCRNTLTWLRSTRARACVPFDDNINFHKIIACAIAIGILVHAGTHLACDFPRIINSSPEQFVLIASAFNGTKPTFKDLMTGAEGITGISMVILTTIAFTLASTHFRRNRVRLPAPLDRLTGFNAFWYTHHLLVVVYIMLIVHGTFLFFADKWYQKTTWMYISVPLVLYVAERSLRACRSKHYSVKILKVSMLPGEVLSLIMSKPPGFKYKSGQYIFLQCPTISRFEWHPFSITSAPGDDQLSVHIRTLGDWTEELRRVLTVGKDLSTCVIGRSKFSAYCNIDMINRPKLLVDGPYGAPAQDYRSYDVLLLIGLGIGATPFISILKDLLNNSRDEQTDNEFSRSDFSWNSCTSSYTTATPTSTHGGKKKAVKAHFYWVTREPGSVEWFRGVMEEISDMDCRGQIELHNYLTSVYDEGDARSTLIKMVQALNHAKHGVDILSGTRVRTHFARPNWKEVFSSIARKHPNSTVGVFYCGIQTVAKELKKQAQDMSQKTTTRFEFHKEHF.

The Cytoplasmic portion of the chain corresponds to 1 to 392 (MKLSPLSFST…QCLILDNWQR (392 aa)). EF-hand-like stretches follow at residues 211-219 (SKNGLLARD) and 245-256 (RRQKLEKITKDE). EF-hand domains are found at residues 268-303 (SFDARLQIFFDMADSNEDGKITREEIKELLMLSASA) and 312-347 (QAEEYASLIMEELDPENFGYIELWQLETLLLQRDAY). Ca(2+) is bound by residues D281, N283, D285, K287, and E292. Residues 393 to 413 (SWVLLVWVMLMAILFVWKFLE) form a helical membrane-spanning segment. The Extracellular segment spans residues 414–475 (YREKAAFKVM…PFDDNINFHK (62 aa)). The Ferric oxidoreductase domain maps to 431-587 (KGAAETLKLN…LLVVVYIMLI (157 aa)). Residues 476 to 496 (IIACAIAIGILVHAGTHLACD) traverse the membrane as a helical segment. Residues 497–531 (FPRIINSSPEQFVLIASAFNGTKPTFKDLMTGAEG) are Cytoplasmic-facing. A helical transmembrane segment spans residues 532 to 552 (ITGISMVILTTIAFTLASTHF). Over 553-574 (RRNRVRLPAPLDRLTGFNAFWY) the chain is Extracellular. Residues 575 to 595 (THHLLVVVYIMLIVHGTFLFF) traverse the membrane as a helical segment. The Cytoplasmic segment spans residues 596 to 603 (ADKWYQKT). The chain crosses the membrane as a helical span at residues 604 to 621 (TWMYISVPLVLYVAERSL). The Extracellular segment spans residues 622-750 (RACRSKHYSV…PYGAPAQDYR (129 aa)). Residues 626-748 (SKHYSVKILK…DGPYGAPAQD (123 aa)) enclose the FAD-binding FR-type domain. A helical membrane pass occupies residues 751–771 (SYDVLLLIGLGIGATPFISIL). The Cytoplasmic segment spans residues 772–952 (KDLLNNSRDE…TRFEFHKEHF (181 aa)).

It belongs to the RBOH (TC 5.B.1.3) family. Monomer and homodimer. In terms of tissue distribution, expressed in roots, inflorescences, leaves and stems.

It is found in the membrane. In terms of biological role, calcium-dependent NADPH oxidase that generates superoxide. The protein is Respiratory burst oxidase homolog protein E (RBOHE) of Arabidopsis thaliana (Mouse-ear cress).